Reading from the N-terminus, the 182-residue chain is ADP-ribosylation factor 1 (182 aa).

Residue glycine 2 is the site of N-myristoyl glycine attachment. GTP contacts are provided by residues 24-31 (GLDAAGKT), 67-71 (DVGGQ), and 126-129 (NKQD).

Belongs to the small GTPase superfamily. Arf family.

It is found in the golgi apparatus. It carries out the reaction GTP + H2O = GDP + phosphate + H(+). Functionally, GTP-binding protein involved in protein trafficking; may modulate vesicle budding and uncoating within the Golgi apparatus. This chain is ADP-ribosylation factor 1 (arfA), found in Dictyostelium discoideum (Social amoeba).